A 422-amino-acid polypeptide reads, in one-letter code: UDP-N-acetylglucosamine 1-carboxyvinyltransferase (422 aa).

22–23 provides a ligand contact to phosphoenolpyruvate; the sequence is KN. A UDP-N-acetyl-alpha-D-glucosamine-binding site is contributed by arginine 95. Cysteine 119 functions as the Proton donor in the catalytic mechanism. A 2-(S-cysteinyl)pyruvic acid O-phosphothioketal modification is found at cysteine 119. Residues 124-128, aspartate 309, and valine 331 contribute to the UDP-N-acetyl-alpha-D-glucosamine site; that span reads RPIDQ.

Belongs to the EPSP synthase family. MurA subfamily.

It localises to the cytoplasm. The enzyme catalyses phosphoenolpyruvate + UDP-N-acetyl-alpha-D-glucosamine = UDP-N-acetyl-3-O-(1-carboxyvinyl)-alpha-D-glucosamine + phosphate. Its pathway is cell wall biogenesis; peptidoglycan biosynthesis. Functionally, cell wall formation. Adds enolpyruvyl to UDP-N-acetylglucosamine. This chain is UDP-N-acetylglucosamine 1-carboxyvinyltransferase, found in Anaeromyxobacter dehalogenans (strain 2CP-1 / ATCC BAA-258).